The chain runs to 154 residues: Endoribonuclease YbeY (154 aa).

Residues His117, His121, and His127 each coordinate Zn(2+).

This sequence belongs to the endoribonuclease YbeY family. Requires Zn(2+) as cofactor.

The protein resides in the cytoplasm. Functionally, single strand-specific metallo-endoribonuclease involved in late-stage 70S ribosome quality control and in maturation of the 3' terminus of the 16S rRNA. The chain is Endoribonuclease YbeY from Aromatoleum aromaticum (strain DSM 19018 / LMG 30748 / EbN1) (Azoarcus sp. (strain EbN1)).